Reading from the N-terminus, the 238-residue chain is MARRYWNINLEEMMVAGVHFGHPTKQWNPKMAPYIYAKVKRKGIHIPNLTRTARFLSEACDLVFDAASRGKEFLIVGTKPKAAGSVVRAAIRARCHYVNKKWLGGMLTNWFTTKTRLHTFRDLRMEQKTGRLNRLPKRDVAMLKRQLSRLQAYLGGIQYMTGLPDIVILVDQHEEYTALRECITLGIPTICLIDTNCDPDLADLPIPANDDAKPSIRLILNKLVFAICEGRSSYIRNP.

Belongs to the universal ribosomal protein uS2 family.

The protein localises to the plastid. Its subcellular location is the chloroplast. The polypeptide is Small ribosomal subunit protein uS2c (rps2) (Jasminum nudiflorum (Winter jasmine)).